Reading from the N-terminus, the 360-residue chain is Magnesium-chelatase subunit ChlI (360 aa).

An ATP-binding site is contributed by 50 to 57 (GDRGTGKS). C285 and C327 are disulfide-bonded.

It belongs to the Mg-chelatase subunits D/I family. In terms of assembly, the magnesium chelatase complex is a heterotrimer consisting of subunits CHLI, CHLD and CHLH.

It localises to the plastid. The protein resides in the chloroplast. The catalysed reaction is protoporphyrin IX + Mg(2+) + ATP + H2O = Mg-protoporphyrin IX + ADP + phosphate + 3 H(+). It participates in porphyrin-containing compound metabolism; chlorophyll biosynthesis. Its activity is regulated as follows. Redox regulation; active in reducing conditions, inactive in oxidizing conditions. Thioredoxins f and m mediate the reversible reductive activation of oxidized CHLI. Its function is as follows. Involved in chlorophyll biosynthesis. Catalyzes the insertion of magnesium ion into protoporphyrin IX to yield Mg-protoporphyrin IX. The magnesium-chelatase is a complex of three subunits, CHLI, CHLD and CHLH. The reaction takes place in two steps, with an ATP-dependent activation followed by an ATP-dependent chelation step. This is Magnesium-chelatase subunit ChlI (chlI) from Mesostigma viride (Green alga).